The chain runs to 524 residues: Inosine-5'-monophosphate dehydrogenase 4 (524 aa).

CBS domains are found at residues 122-183 (FINS…VVSE) and 185-241 (MTKN…PLAS). Ser-125 bears the Phosphoserine mark. NAD(+) contacts are provided by residues 279-281 (DSS) and 329-331 (GMG). Gly-331 and Gly-333 together coordinate K(+). Ser-334 is a binding site for IMP. Cys-336 contributes to the K(+) binding site. Cys-336 functions as the Thioimidate intermediate in the catalytic mechanism. Residues 369 to 371 (DGG), 392 to 393 (GG), and 416 to 420 (YRGMG) contribute to the IMP site. Arg-438 serves as the catalytic Proton acceptor. An IMP-binding site is contributed by Gln-450. Glu-509, Gly-510, and Gly-511 together coordinate K(+).

Belongs to the IMPDH/GMPR family. As to quaternary structure, homotetramer. Seems to be able to form heterotetramers composed from more than 1 of the 3 IMPDH gene products (IMD2-4). K(+) is required as a cofactor.

It localises to the cytoplasm. The catalysed reaction is IMP + NAD(+) + H2O = XMP + NADH + H(+). It functions in the pathway purine metabolism; XMP biosynthesis via de novo pathway; XMP from IMP: step 1/1. Mycophenolic acid (MPA) is a non-competitive inhibitor that prevents formation of the closed enzyme conformation by binding to the same site as the amobile flap. In contrast, mizoribine monophosphate (MZP) is a competitive inhibitor that induces the closed conformation. MPA is a potent inhibitor of mammalian IMPDHs but a poor inhibitor of the bacterial enzymes. MZP is a more potent inhibitor of bacterial IMPDH. Its function is as follows. Catalyzes the conversion of inosine 5'-phosphate (IMP) to xanthosine 5'-phosphate (XMP), the first committed and rate-limiting step in the de novo synthesis of guanine nucleotides, and therefore plays an important role in the regulation of cell growth. This Saccharomyces cerevisiae (strain ATCC 204508 / S288c) (Baker's yeast) protein is Inosine-5'-monophosphate dehydrogenase 4.